Here is a 343-residue protein sequence, read N- to C-terminus: Cytoplasmic tRNA 2-thiolation protein 1 (343 aa).

Belongs to the TtcA family. CTU1/NCS6/ATPBD3 subfamily.

It is found in the cytoplasm. It participates in tRNA modification; 5-methoxycarbonylmethyl-2-thiouridine-tRNA biosynthesis. Plays a central role in 2-thiolation of mcm(5)S(2)U at tRNA wobble positions of tRNA(Lys), tRNA(Glu) and tRNA(Gln). Directly binds tRNAs and probably acts by catalyzing adenylation of tRNAs, an intermediate required for 2-thiolation. It is unclear whether it acts as a sulfurtransferase that transfers sulfur from thiocarboxylated URM1 onto the uridine of tRNAs at wobble position. The polypeptide is Cytoplasmic tRNA 2-thiolation protein 1 (Drosophila sechellia (Fruit fly)).